We begin with the raw amino-acid sequence, 1132 residues long: Myosin-binding protein C, fast-type (1132 aa).

A disordered region spans residues 1–59 (MPEPSKAAPKKEAKKKEEKKEEKKEAPPPQEHKDEAPDDVHPPETPDPEGLFLSKPQNV). Basic and acidic residues predominate over residues 9 to 44 (PKKEAKKKEEKKEEKKEAPPPQEHKDEAPDDVHPPE). 5 Ig-like C2-type domains span residues 48–149 (PEGL…SIDV), 249–338 (SEAF…VKEP), 339–429 (PVTV…VEEK), 430–530 (QLEV…KQEP), and 531–630 (PKIH…VVDV). 2 consecutive Fibronectin type-III domains span residues 633–729 (PPQS…IAPT) and 731–826 (EPTH…IREI). The Ig-like C2-type 6 domain maps to 830–923 (PKIRLPRHLR…ATLRLRVVER (94 aa)). Residues 926–1022 (PPQAVRVMEV…HNTARIAKEG (97 aa)) form the Fibronectin type-III 3 domain. Residues 1039-1132 (PQFLTPLVDR…ECRLDVRVPQ (94 aa)) enclose the Ig-like C2-type 7 domain.

The protein belongs to the immunoglobulin superfamily. MyBP family.

Functionally, thick filament-associated protein located in the crossbridge region of vertebrate striated muscle a bands. In vitro it binds MHC, F-actin and native thin filaments, and modifies the activity of actin-activated myosin ATPase. It may modulate muscle contraction or may play a more structural role. This is Myosin-binding protein C, fast-type (MYBPC2) from Gallus gallus (Chicken).